The primary structure comprises 361 residues: Cytochrome P450 family protein EryCII (361 aa).

The protein belongs to the cytochrome P450 family. As to quaternary structure, heterotetramer composed of EryCII and EryCIII.

It functions in the pathway antibiotic biosynthesis; erythromycin biosynthesis. Functionally, involved in the erythromycin biosynthesis pathway. Acts by forming a complex and stabilizing the desosaminyl transferase EryCIII. The polypeptide is Cytochrome P450 family protein EryCII (eryCII) (Saccharopolyspora erythraea (strain ATCC 11635 / DSM 40517 / JCM 4748 / NBRC 13426 / NCIMB 8594 / NRRL 2338)).